Here is a 300-residue protein sequence, read N- to C-terminus: Porphobilinogen deaminase (300 aa).

The residue at position 239 (Cys-239) is an S-(dipyrrolylmethanemethyl)cysteine.

Belongs to the HMBS family. As to quaternary structure, monomer. The cofactor is dipyrromethane.

The catalysed reaction is 4 porphobilinogen + H2O = hydroxymethylbilane + 4 NH4(+). The protein operates within porphyrin-containing compound metabolism; protoporphyrin-IX biosynthesis; coproporphyrinogen-III from 5-aminolevulinate: step 2/4. Tetrapolymerization of the monopyrrole PBG into the hydroxymethylbilane pre-uroporphyrinogen in several discrete steps. The protein is Porphobilinogen deaminase of Francisella philomiragia subsp. philomiragia (strain ATCC 25017 / CCUG 19701 / FSC 153 / O#319-036).